A 252-amino-acid chain; its full sequence is Cell division protein ZapD (252 aa).

The protein belongs to the ZapD family. As to quaternary structure, interacts with FtsZ.

It is found in the cytoplasm. In terms of biological role, cell division factor that enhances FtsZ-ring assembly. Directly interacts with FtsZ and promotes bundling of FtsZ protofilaments, with a reduction in FtsZ GTPase activity. This chain is Cell division protein ZapD, found in Cupriavidus necator (strain ATCC 17699 / DSM 428 / KCTC 22496 / NCIMB 10442 / H16 / Stanier 337) (Ralstonia eutropha).